The following is a 610-amino-acid chain: Cytosolic 5'-nucleotidase 1B (610 aa).

Disordered regions lie at residues 1–34 and 101–277; these read MSQT…DKTG and GSQE…DEDD. Over residues 9–34 the composition is skewed to basic and acidic residues; sequence KKNEPGMRSSKESLEAEKRKESDKTG. Polar residues predominate over residues 119-132; the sequence is SQWSRISRSPSTKA. Residues 148–166 show a composition bias toward low complexity; sequence PSSSTSSRTPSTSPSLHDS. Positions 167–183 are enriched in pro residues; sequence SPPPLSGQPSLQPPASP. A compositionally biased stretch (polar residues) spans 236-265; it reads SRTSPTEWKSSSQRRGIYPASTQLDRNSLS. The active-site Nucleophile is D467.

Belongs to the 5'-nucleotidase type 3 family. Requires Mg(2+) as cofactor. In terms of tissue distribution, highly expressed in testis, placenta and pancreas. Detected at lower levels in heart, kidney, liver and lung.

The protein resides in the cytoplasm. It catalyses the reaction a ribonucleoside 5'-phosphate + H2O = a ribonucleoside + phosphate. The enzyme catalyses AMP + H2O = adenosine + phosphate. With respect to regulation, activated by ADP. Catalyzes the hydrolysis of nucleotide monophosphates, releasing inorganic phosphate and the corresponding nucleoside, AMP is the major substrate. The polypeptide is Cytosolic 5'-nucleotidase 1B (NT5C1B) (Homo sapiens (Human)).